Reading from the N-terminus, the 328-residue chain is Beta-ketoacyl-[acyl-carrier-protein] synthase III 2 (328 aa).

Active-site residues include Cys113 and His255. The interval 256-260 (QANAR) is ACP-binding. Asn285 is a catalytic residue.

Belongs to the thiolase-like superfamily. FabH family. In terms of assembly, homodimer.

The protein resides in the cytoplasm. The enzyme catalyses malonyl-[ACP] + acetyl-CoA + H(+) = 3-oxobutanoyl-[ACP] + CO2 + CoA. It functions in the pathway lipid metabolism; fatty acid biosynthesis. Its function is as follows. Catalyzes the condensation reaction of fatty acid synthesis by the addition to an acyl acceptor of two carbons from malonyl-ACP. Catalyzes the first condensation reaction which initiates fatty acid synthesis and may therefore play a role in governing the total rate of fatty acid production. Possesses both acetoacetyl-ACP synthase and acetyl transacylase activities. Its substrate specificity determines the biosynthesis of branched-chain and/or straight-chain of fatty acids. The protein is Beta-ketoacyl-[acyl-carrier-protein] synthase III 2 of Lactiplantibacillus plantarum (strain ATCC BAA-793 / NCIMB 8826 / WCFS1) (Lactobacillus plantarum).